A 138-amino-acid chain; its full sequence is Small ribosomal subunit protein uS12 (138 aa).

Over residues M1–P22 the composition is skewed to polar residues. The segment at M1–G45 is disordered. D102 is subject to 3-methylthioaspartic acid.

Belongs to the universal ribosomal protein uS12 family. Part of the 30S ribosomal subunit. Contacts proteins S8 and S17. May interact with IF1 in the 30S initiation complex.

In terms of biological role, with S4 and S5 plays an important role in translational accuracy. Its function is as follows. Interacts with and stabilizes bases of the 16S rRNA that are involved in tRNA selection in the A site and with the mRNA backbone. Located at the interface of the 30S and 50S subunits, it traverses the body of the 30S subunit contacting proteins on the other side and probably holding the rRNA structure together. The combined cluster of proteins S8, S12 and S17 appears to hold together the shoulder and platform of the 30S subunit. The chain is Small ribosomal subunit protein uS12 from Lacticaseibacillus paracasei (strain ATCC 334 / BCRC 17002 / CCUG 31169 / CIP 107868 / KCTC 3260 / NRRL B-441) (Lactobacillus paracasei).